The chain runs to 745 residues: Jacalin-related lectin 4 (745 aa).

Jacalin-type lectin domains are found at residues 2 to 148 (AQKL…YFAP), 151 to 294 (PTKF…YFSP), 307 to 448 (AEKL…YFVT), 451 to 594 (PTKF…YFSR), and 601 to 744 (AETL…YVMP).

The protein belongs to the jacalin lectin family.

The sequence is that of Jacalin-related lectin 4 (JAL4) from Arabidopsis thaliana (Mouse-ear cress).